Reading from the N-terminus, the 61-residue chain is Adipokinetic prohormone type 2 (61 aa).

The N-terminal stretch at 1–22 (MTQSCTLTLVLVVAVLAALATA) is a signal peptide. Gln23 is modified (pyrrolidone carboxylic acid). Trp30 carries the post-translational modification Tryptophan amide.

This sequence belongs to the AKH/HRTH/RPCH family. In terms of assembly, adipokinetic hormone precursor-related peptide (APRP) can form three type of disulfide-bond dimers: p1 (alpha-alpha), p2 (alpha-beta), and p3 (beta-beta).

It localises to the secreted. Functionally, this hormone, released from cells in the corpora cardiaca, causes release of diglycerides from the fat body and stimulation of muscles to use these diglycerides as an energy source during energy-demanding processes. This is Adipokinetic prohormone type 2 from Locusta migratoria (Migratory locust).